We begin with the raw amino-acid sequence, 29 residues long: HSEGTFSSDYSKYLDSRRAKDFVQWLMST.

It belongs to the glucagon family.

Its subcellular location is the secreted. In terms of biological role, glucagon plays a key role in glucose metabolism and homeostasis. Regulates blood glucose by increasing gluconeogenesis and decreasing glycolysis. In Callorhinchus milii (Ghost shark), this protein is Glucagon (gcg).